Here is a 240-residue protein sequence, read N- to C-terminus: Lactate utilization protein C (240 aa).

This sequence belongs to the LutC/YkgG family.

Is involved in L-lactate degradation and allows cells to grow with lactate as the sole carbon source. The sequence is that of Lactate utilization protein C from Geobacillus thermodenitrificans (strain NG80-2).